The following is a 158-amino-acid chain: 3-dehydroquinate dehydratase (158 aa).

Catalysis depends on Tyr-22, which acts as the Proton acceptor. Substrate contacts are provided by Asn-74, His-80, and Asp-87. His-100 serves as the catalytic Proton donor. Substrate-binding positions include 101-102 and Arg-111; that span reads IS.

Belongs to the type-II 3-dehydroquinase family. As to quaternary structure, homododecamer.

The enzyme catalyses 3-dehydroquinate = 3-dehydroshikimate + H2O. The protein operates within metabolic intermediate biosynthesis; chorismate biosynthesis; chorismate from D-erythrose 4-phosphate and phosphoenolpyruvate: step 3/7. Functionally, catalyzes a trans-dehydration via an enolate intermediate. The polypeptide is 3-dehydroquinate dehydratase (Helicobacter hepaticus (strain ATCC 51449 / 3B1)).